The following is a 413-amino-acid chain: Coiled-coil domain-containing protein 83 (413 aa).

Coiled-coil stretches lie at residues 32–186 (HCQI…RIIR) and 215–255 (IWEN…QLFN).

The sequence is that of Coiled-coil domain-containing protein 83 (CCDC83) from Bos taurus (Bovine).